Consider the following 365-residue polypeptide: tRNA(Met) cytidine acetate ligase (365 aa).

ATP-binding positions include 7–20, Gly-96, Asn-152, and Arg-175; that span reads IAEF…HKYL.

It belongs to the TmcAL family.

The protein localises to the cytoplasm. The enzyme catalyses cytidine(34) in elongator tRNA(Met) + acetate + ATP = N(4)-acetylcytidine(34) in elongator tRNA(Met) + AMP + diphosphate. Functionally, catalyzes the formation of N(4)-acetylcytidine (ac(4)C) at the wobble position of elongator tRNA(Met), using acetate and ATP as substrates. First activates an acetate ion to form acetyladenylate (Ac-AMP) and then transfers the acetyl group to tRNA to form ac(4)C34. The chain is tRNA(Met) cytidine acetate ligase from Streptococcus pneumoniae serotype 4 (strain ATCC BAA-334 / TIGR4).